The primary structure comprises 1502 residues: MSESAKAAAQNGQAEEQQLQQQLDEQQQLEEQQQLPPVTIRIPSPTCSRTVPKPKDSTEPLDRITLYPQPQETIQDIKLLINDWVGAYWLGPYSLQLPFVKGEDGRGKIYSKKKDFSEVRAGEKLNEWLEVQDAFEHLQEGEERVLEAVREPYGELSARQSIIRLLELIAPSGTTANTTSNPLGLQAGSTIFEQVRDGLVSANAETTYEEVEVSLPSGRKGKGGKKELVKVKRSVSGDKAHAFADWKGWAPASFGSLAVSSDPVEVAPSLKSIQISHFNPPPPHLRQKGHELYLQVSLLEGEVVTLICSTRGWYVSKSNVNNFDPSPRPSADGSIPAPTHSLIDLLHSISPLFSERVSRLPPISLDGALADPISTVAIPQATPAYPFLTSPPKPAISPEILRTQLAFLHTGAYGPDLVDAARDWNEEIQGIRELPRGTMQERVFREKMLQKVWAEFDQAAARAVQAVSKGDIPPINPAEDPKAHMYLQSNIFITQGDSDALDTYAHLGGDAAMRISHGKDAAGVKLLNKIDADGLYLLGHTIVDWQGRRWICQSILPGIFSNRRAVEEEKAQAETEAEAETADAVEGEQKKEDWVDVEKPTEKSGSETESDNPMMIYGLDSERPTSVHWDAATHSLLSTIATPLRLAAHTIKDGEGKEHEFYASAEVKGLKGQDGRRYLLDAQRLAPVDVEWLEKDITGPLVGPKKDDESAEEGVQYPHRLVMLRPELIEQFWESELKRWARGVAEKAQAKKAEAEAEAAAAADAEGEKKKEGEQSEIPQEEQSAAASAAAARRAEEDRPVDASLIGDIKQFNLSFNPDAFVEQPVLEAEGQEGKTEIKAAITDESDPSVKAVRDAGLFLRQIAIPAVVLDVLTGNTSGVMDGESLSKHLHQRGVNIRYLGHLASTIIQFSTSKDGAAKEPSGHLAALQSIVLQEMVFRAAKHILRELLYPLQPETATDAVSHFLNCLLGSCLNPAPVASYTPIGINSNEPEPAYVKLTPECLRAQIIKEVKSRFRWTLDESFLESGLRKKQLLRELASRVGFQLAQREYVFSKDQEEEENKREENIKSKEKKKGSKAGAKGETVKRTTTFEGEDVLTLVPVIKSTAPSVSVAEEILEAGRNTINRGKIEFGLDFMLEAIQLYESIHSVIHPEVASVYNSYAQAIHQIARLKIQQIAAQENPDPEQPLGVDISGALRFQRQAVAIAERTLGVYHHETAGYYFQLAMLENLEGNAQQSLRYFRHLLTLWDVIYGPGHPEISTILSNAGIVLQSMNDLSLSLSLQKQAYESTLACFGPNHIQTGQSLHQLVQGHFLAGDMASALETAKQALEIFKARLGEEHNQTKEEAKNVELLTAVIENQERQKEREEAVKKEATERLKMARERIGGGAASTSRPTGIRRLGGAGAGALPQGVRVVDPQTLAALAAAAGQGGNPSANAAAATAGQGEQANGESTGTPQIGERGTESLEELVRYIQGSAPGVGGSAKRGKNALRGKRRTGAKR.

6 disordered regions span residues 1–62 (MSES…EPLD), 571–615 (AQAE…NPMM), 755–799 (AEAE…EEDR), 1054–1085 (KDQEEEENKREENIKSKEKKKGSKAGAKGETV), 1381–1403 (ARERIGGGAASTSRPTGIRRLGG), and 1429–1502 (GQGG…GAKR). The segment covering 7–35 (AAAQNGQAEEQQLQQQLDEQQQLEEQQQL) has biased composition (low complexity). Residues 53 to 62 (KPKDSTEPLD) show a composition bias toward basic and acidic residues. One can recognise a Clu domain in the interval 399–693 (EILRTQLAFL…RLAPVDVEWL (295 aa)). Positions 575-586 (TEAEAETADAVE) are enriched in acidic residues. Over residues 587–606 (GEQKKEDWVDVEKPTEKSGS) the composition is skewed to basic and acidic residues. The span at 781-792 (EEQSAAASAAAA) shows a compositional bias: low complexity. Residues 1054 to 1069 (KDQEEEENKREENIKS) show a composition bias toward basic and acidic residues. Low complexity predominate over residues 1429-1451 (GQGGNPSANAAAATAGQGEQANG). A compositionally biased stretch (basic and acidic residues) spans 1462–1471 (RGTESLEELV). Over residues 1486–1502 (KRGKNALRGKRRTGAKR) the composition is skewed to basic residues.

Belongs to the CLU family. May associate with the eukaryotic translation initiation factor 3 (eIF-3) complex.

It is found in the cytoplasm. Functionally, mRNA-binding protein involved in proper cytoplasmic distribution of mitochondria. This chain is Clustered mitochondria protein homolog, found in Cryptococcus neoformans var. neoformans serotype D (strain B-3501A) (Filobasidiella neoformans).